A 387-amino-acid chain; its full sequence is WD repeat-containing protein 55 (387 aa).

Basic and acidic residues predominate over residues Met1–Leu10. Residues Met1–Lys24 form a disordered region. WD repeat units lie at residues Lys33–Lys72, His79–Arg118, Ala122–Asp160, His163–Leu202, Ile205–Asp244, Ala247–Ser286, and His290–Val329. The segment at Phe356–Asp387 is disordered. A compositionally biased stretch (acidic residues) spans Glu372–Asp387.

It belongs to the WD repeat WDR55 family.

Its subcellular location is the nucleus. The protein localises to the nucleolus. In terms of biological role, nucleolar protein that acts as a modulator of rRNA synthesis. Plays a central role during organogenesis. This Danio rerio (Zebrafish) protein is WD repeat-containing protein 55 (wdr55).